Here is a 329-residue protein sequence, read N- to C-terminus: uncharacterized protein (329 aa).

9 consecutive transmembrane segments (helical) span residues 5–24 (NLLL…FLTV), 34–56 (IAVA…YLIF), 92–114 (FGYI…LEWG), 124–146 (IIFF…VLFY), 159–181 (SANF…LLSL), 196–218 (TAHR…LQYL), 231–253 (FSIV…LGAY), 263–285 (LIGV…RLFG), and 306–328 (FWLF…RILT).

It is found in the cell membrane. This is an uncharacterized protein from Archaeoglobus fulgidus (strain ATCC 49558 / DSM 4304 / JCM 9628 / NBRC 100126 / VC-16).